Reading from the N-terminus, the 409-residue chain is Outer membrane protein assembly factor BamB (409 aa).

The first 34 residues, 1–34 (MAGNILLLILDYVFHAGSRTLRVCILSLLILLSG), serve as a signal peptide directing secretion. C35 is lipidated: N-palmitoyl cysteine. C35 carries the S-diacylglycerol cysteine lipid modification.

Belongs to the BamB family. As to quaternary structure, part of the Bam complex.

The protein localises to the cell outer membrane. Part of the outer membrane protein assembly complex, which is involved in assembly and insertion of beta-barrel proteins into the outer membrane. This Nitrosomonas eutropha (strain DSM 101675 / C91 / Nm57) protein is Outer membrane protein assembly factor BamB.